Here is a 238-residue protein sequence, read N- to C-terminus: Pyridoxine 5'-phosphate synthase (238 aa).

Asn6 is a binding site for 3-amino-2-oxopropyl phosphate. 1-deoxy-D-xylulose 5-phosphate is bound at residue Asp8 to His9. Arg17 is a binding site for 3-amino-2-oxopropyl phosphate. The active-site Proton acceptor is the His42. Residues Arg44 and His49 each contribute to the 1-deoxy-D-xylulose 5-phosphate site. Glu69 (proton acceptor) is an active-site residue. Residue Thr99 participates in 1-deoxy-D-xylulose 5-phosphate binding. His186 functions as the Proton donor in the catalytic mechanism. Residues Gly187 and Gly208–His209 each bind 3-amino-2-oxopropyl phosphate.

The protein belongs to the PNP synthase family. As to quaternary structure, homooctamer; tetramer of dimers.

The protein resides in the cytoplasm. The enzyme catalyses 3-amino-2-oxopropyl phosphate + 1-deoxy-D-xylulose 5-phosphate = pyridoxine 5'-phosphate + phosphate + 2 H2O + H(+). It participates in cofactor biosynthesis; pyridoxine 5'-phosphate biosynthesis; pyridoxine 5'-phosphate from D-erythrose 4-phosphate: step 5/5. Catalyzes the complicated ring closure reaction between the two acyclic compounds 1-deoxy-D-xylulose-5-phosphate (DXP) and 3-amino-2-oxopropyl phosphate (1-amino-acetone-3-phosphate or AAP) to form pyridoxine 5'-phosphate (PNP) and inorganic phosphate. The sequence is that of Pyridoxine 5'-phosphate synthase from Anaplasma marginale (strain St. Maries).